Reading from the N-terminus, the 1252-residue chain is Elongator complex protein 1 (1252 aa).

Residues 814-1252 (VDVNDLYNVA…MMDWQHEILQ (439 aa)) are mediates dimerization. Phosphoserine is present on serine 1094. Positions 1097–1116 (SSQYSGTSRRTGKTFRSSKN) are disordered. A compositionally biased stretch (basic residues) spans 1106-1116 (RTGKTFRSSKN). Positions 1111–1129 (FRSSKNRRKHERKLFSLKP) are required for binding to tRNA.

It belongs to the ELP1/IKA1 family. In terms of assembly, homodimer. Component of the elongator complex composed of Elp1, Elp2, Elp3, Elp4, Elp5 and Elp6. The elongator complex associates with and stabilizes microtubules; efficient interaction requires the full complex.

Its subcellular location is the cytoplasm. It is found in the nucleus. It localises to the cytoskeleton. The protein localises to the spindle. The protein operates within tRNA modification; 5-methoxycarbonylmethyl-2-thiouridine-tRNA biosynthesis. Its function is as follows. Component of the elongator complex, which is required for multiple tRNA modifications, including mcm5U (5-methoxycarbonylmethyl uridine), mcm5s2U (5-methoxycarbonylmethyl-2-thiouridine), and ncm5U (5-carbamoylmethyl uridine). The elongator complex catalyzes formation of carboxymethyluridine in the wobble base at position 34 in tRNAs. ELP1 binds to tRNA, mediating interaction of the elongator complex with tRNA. Binding by the elongator complex stabilizes microtubules and promotes their growth. This induces central spindle asymmetry, promoting polarized signaling endosome trafficking during asymmetric cell division and cell fate assignation of sensory organ precursor cells. Involved in protein synthesis-dependent long-term memory formation, probably as part of the elongator complex. In Drosophila melanogaster (Fruit fly), this protein is Elongator complex protein 1.